We begin with the raw amino-acid sequence, 587 residues long: MRPRGLPPLLVVLLGCWASVSAQTDATPAVTTEGLNSTEAALATFGTFPSTRPPGTPRAPGPSSGPRPTPVTDVAVLCVCDLSPAQCDINCCCDPDCSSVDFSVFSACSVPVVTGDSQFCSQKAVIYSLNFTANPPQRVFELVDQINPSIFCIHITNYKPALSFINPEVPDENNFDTLMKTSDGFTLNAESYVSFTTKLDIPTAAKYEYGVPLQTSDSFLRFPSSLTSSLCTDNNPAAFLVNQAVKCTRKINLEQCEEIEALSMAFYSSPEILRVPDSRKKVPITVQSIVIQSLNKTLTRREDTDVLQPTLVNAGHFSLCVNVVLEVKYSLTYTDAGEVTKADLSFVLGTVSSVVVPLQQKFEIHFLQENTQPVPLSGNPGYVVGLPLAAGFQPHKGSGIIQTTNRYGQLTILHSTTEQDCLALEGVRTPVLFGYTMQSGCKLRLTGALPCQLVAQKVKSLLWGQGFPDYVAPFGNSQAQDMLDWVPIHFITQSFNRKDSCQLPGALVIEVKWTKYGSLLNPQAKIVNVTANLISSSFPEANSGNERTILISTAVTFVDVSAPAEAGFRAPPAINARLPFNFFFPFV.

The N-terminal stretch at 1 to 22 (MRPRGLPPLLVVLLGCWASVSA) is a signal peptide. Asparagine 36 is a glycosylation site (N-linked (GlcNAc...) asparagine). Positions 46–68 (GTFPSTRPPGTPRAPGPSSGPRP) are disordered. Positions 51–68 (TRPPGTPRAPGPSSGPRP) are enriched in pro residues. N-linked (GlcNAc...) asparagine glycans are attached at residues asparagine 295 and asparagine 528.

Belongs to the tectonic family. As to quaternary structure, part of the tectonic-like complex (also named B9 complex).

It localises to the cytoplasm. The protein localises to the cytoskeleton. Its subcellular location is the cilium basal body. It is found in the secreted. Its function is as follows. Component of the tectonic-like complex, a complex localized at the transition zone of primary cilia and acting as a barrier that prevents diffusion of transmembrane proteins between the cilia and plasma membranes. Regulator of Hedgehog (Hh), required for both activation and inhibition of the Hh pathway in the patterning of the neural tube. During neural tube development, it is required for formation of the most ventral cell types and for full Hh pathway activation. Functions in Hh signal transduction to fully activate the pathway in the presence of high Hh levels and to repress the pathway in the absence of Hh signals. Modulates Hh signal transduction downstream of SMO and RAB23. The polypeptide is Tectonic-1 (TCTN1) (Homo sapiens (Human)).